A 246-amino-acid polypeptide reads, in one-letter code: Small ribosomal subunit protein uS2 (246 aa).

Residues 224–246 (AKQGEESAETEAKEAETTETTTA) form a disordered region. A compositionally biased stretch (basic and acidic residues) spans 225-239 (KQGEESAETEAKEAE).

The protein belongs to the universal ribosomal protein uS2 family.

The chain is Small ribosomal subunit protein uS2 from Bacillus licheniformis (strain ATCC 14580 / DSM 13 / JCM 2505 / CCUG 7422 / NBRC 12200 / NCIMB 9375 / NCTC 10341 / NRRL NRS-1264 / Gibson 46).